The primary structure comprises 346 residues: Phosphoribosylformylglycinamidine cyclo-ligase (346 aa).

This sequence belongs to the AIR synthase family.

It localises to the cytoplasm. The enzyme catalyses 2-formamido-N(1)-(5-O-phospho-beta-D-ribosyl)acetamidine + ATP = 5-amino-1-(5-phospho-beta-D-ribosyl)imidazole + ADP + phosphate + H(+). Its pathway is purine metabolism; IMP biosynthesis via de novo pathway; 5-amino-1-(5-phospho-D-ribosyl)imidazole from N(2)-formyl-N(1)-(5-phospho-D-ribosyl)glycinamide: step 2/2. In Vibrio parahaemolyticus serotype O3:K6 (strain RIMD 2210633), this protein is Phosphoribosylformylglycinamidine cyclo-ligase.